The primary structure comprises 123 residues: Large ribosomal subunit protein uL18 (123 aa).

The protein belongs to the universal ribosomal protein uL18 family. Part of the 50S ribosomal subunit; part of the 5S rRNA/L5/L18/L25 subcomplex. Contacts the 5S and 23S rRNAs.

Functionally, this is one of the proteins that bind and probably mediate the attachment of the 5S RNA into the large ribosomal subunit, where it forms part of the central protuberance. This is Large ribosomal subunit protein uL18 from Bifidobacterium animalis subsp. lactis (strain AD011).